A 199-amino-acid chain; its full sequence is Small ribosomal subunit protein uS4 (199 aa).

The 61-residue stretch at 91–151 folds into the S4 RNA-binding domain; the sequence is SRLDNLVYRF…EKSKNVKAIA (61 aa).

This sequence belongs to the universal ribosomal protein uS4 family. As to quaternary structure, part of the 30S ribosomal subunit. Contacts protein S5. The interaction surface between S4 and S5 is involved in control of translational fidelity.

One of the primary rRNA binding proteins, it binds directly to 16S rRNA where it nucleates assembly of the body of the 30S subunit. In terms of biological role, with S5 and S12 plays an important role in translational accuracy. The polypeptide is Small ribosomal subunit protein uS4 (Exiguobacterium sp. (strain ATCC BAA-1283 / AT1b)).